The chain runs to 330 residues: DNA-directed RNA polymerase subunit alpha (330 aa).

An alpha N-terminal domain (alpha-NTD) region spans residues 1-236 (MQGSVTEFLK…EQLDAFVDLR (236 aa)). The tract at residues 250–330 (FDPILLRPVD…NWPPASIAED (81 aa)) is alpha C-terminal domain (alpha-CTD).

It belongs to the RNA polymerase alpha chain family. Homodimer. The RNAP catalytic core consists of 2 alpha, 1 beta, 1 beta' and 1 omega subunit. When a sigma factor is associated with the core the holoenzyme is formed, which can initiate transcription.

It carries out the reaction RNA(n) + a ribonucleoside 5'-triphosphate = RNA(n+1) + diphosphate. In terms of biological role, DNA-dependent RNA polymerase catalyzes the transcription of DNA into RNA using the four ribonucleoside triphosphates as substrates. The sequence is that of DNA-directed RNA polymerase subunit alpha from Vibrio atlanticus (strain LGP32) (Vibrio splendidus (strain Mel32)).